We begin with the raw amino-acid sequence, 544 residues long: Methionine--tRNA ligase (544 aa).

The short motif at 10-20 (PYANGSLHLGH) is the 'HIGH' region element. Zn(2+) contacts are provided by cysteine 141, cysteine 144, cysteine 153, and cysteine 156. The short motif at 329-333 (KLSTS) is the 'KMSKS' region element. Position 332 (threonine 332) interacts with ATP.

It belongs to the class-I aminoacyl-tRNA synthetase family. MetG type 1 subfamily. As to quaternary structure, monomer. It depends on Zn(2+) as a cofactor.

The protein localises to the cytoplasm. The catalysed reaction is tRNA(Met) + L-methionine + ATP = L-methionyl-tRNA(Met) + AMP + diphosphate. Functionally, is required not only for elongation of protein synthesis but also for the initiation of all mRNA translation through initiator tRNA(fMet) aminoacylation. The sequence is that of Methionine--tRNA ligase from Bacillus cereus (strain G9842).